Reading from the N-terminus, the 217-residue chain is Sentrin-specific protease 8 (217 aa).

Met-1 bears the N-acetylmethionine mark. The segment at 11–174 (SLLRQSDVSL…MYVICNTEAL (164 aa)) is protease. Active-site residues include His-102 and Asp-119. Cys-163 serves as the catalytic Nucleophile.

The protein belongs to the peptidase C48 family.

In terms of biological role, protease that catalyzes two essential functions in the NEDD8 pathway: processing of full-length NEDD8 to its mature form and deconjugation of NEDD8 from targeted proteins such as cullins or p53. The protein is Sentrin-specific protease 8 (Senp8) of Rattus norvegicus (Rat).